Consider the following 269-residue polypeptide: Indole-3-glycerol phosphate synthase (269 aa).

It belongs to the TrpC family.

It catalyses the reaction 1-(2-carboxyphenylamino)-1-deoxy-D-ribulose 5-phosphate + H(+) = (1S,2R)-1-C-(indol-3-yl)glycerol 3-phosphate + CO2 + H2O. It functions in the pathway amino-acid biosynthesis; L-tryptophan biosynthesis; L-tryptophan from chorismate: step 4/5. The polypeptide is Indole-3-glycerol phosphate synthase (Streptomyces griseus subsp. griseus (strain JCM 4626 / CBS 651.72 / NBRC 13350 / KCC S-0626 / ISP 5235)).